The chain runs to 207 residues: Casparian strip membrane protein 1 (207 aa).

The segment covering 1–12 (MEGESTAVNITE) has biased composition (polar residues). Residues 1 to 24 (MEGESTAVNITETPKERKGKAPLL) form a disordered region. At 1 to 48 (MEGESTAVNITETPKERKGKAPLLAPPPASGGIKTIVQKAPKGGYKRG) the chain is on the cytoplasmic side. Residues 49-69 (LAVFDVVLRIAGIAAALGAVI) form a helical membrane-spanning segment. Residues 70 to 98 (AMGSTDQTLPFFTQFFQFKAEFDDLPVFT) are Extracellular-facing. Residues 99–119 (FFVIANAITAAYLALSIPISI) traverse the membrane as a helical segment. The Cytoplasmic portion of the chain corresponds to 120–138 (VCIIRPHLVGPRVLLTFLD). Residues 139–159 (TVMVGLTTAAAGGAASIVYLA) traverse the membrane as a helical segment. At 160-184 (HNGNSDANWPAICQQFNDFCQEVSG) the chain is on the extracellular side. A helical membrane pass occupies residues 185-205 (AVVASFITVVVLMFLIVLSAF). Residues 206 to 207 (SL) are Cytoplasmic-facing.

The protein belongs to the Casparian strip membrane proteins (CASP) family. In terms of assembly, homodimer and heterodimers.

The protein localises to the cell membrane. Its function is as follows. Regulates membrane-cell wall junctions and localized cell wall deposition. Required for establishment of the Casparian strip membrane domain (CSD) and the subsequent formation of Casparian strips, a cell wall modification of the root endodermis that determines an apoplastic barrier between the intraorganismal apoplasm and the extraorganismal apoplasm and prevents lateral diffusion. In Taraxacum kok-saghyz (Russian dandelion), this protein is Casparian strip membrane protein 1.